We begin with the raw amino-acid sequence, 754 residues long: 5-methyltetrahydropteroyltriglutamate--homocysteine methyltransferase (754 aa).

5-methyltetrahydropteroyltri-L-glutamate is bound by residues 15 to 18 and Lys114; that span reads RELK. Residues 430–432 and Glu483 each bind L-homocysteine; that span reads IGS. L-methionine is bound by residues 430-432 and Glu483; that span reads IGS. Residues 514-515 and Trp560 contribute to the 5-methyltetrahydropteroyltri-L-glutamate site; that span reads RC. Residue Asp598 participates in L-homocysteine binding. Residue Asp598 coordinates L-methionine. A 5-methyltetrahydropteroyltri-L-glutamate-binding site is contributed by Glu604. Residues His641, Cys643, and Glu665 each contribute to the Zn(2+) site. His694 serves as the catalytic Proton donor. Position 726 (Cys726) interacts with Zn(2+).

It belongs to the vitamin-B12 independent methionine synthase family. Zn(2+) is required as a cofactor.

The enzyme catalyses 5-methyltetrahydropteroyltri-L-glutamate + L-homocysteine = tetrahydropteroyltri-L-glutamate + L-methionine. Its pathway is amino-acid biosynthesis; L-methionine biosynthesis via de novo pathway; L-methionine from L-homocysteine (MetE route): step 1/1. In terms of biological role, catalyzes the transfer of a methyl group from 5-methyltetrahydrofolate to homocysteine resulting in methionine formation. The sequence is that of 5-methyltetrahydropteroyltriglutamate--homocysteine methyltransferase from Campylobacter jejuni subsp. jejuni serotype O:23/36 (strain 81-176).